Reading from the N-terminus, the 192-residue chain is Imidazole glycerol phosphate synthase subunit HisH (192 aa).

The 192-residue stretch at 1–192 (MIAIIDYGLG…QALKGGFIND (192 aa)) folds into the Glutamine amidotransferase type-1 domain. The active-site Nucleophile is the Cys-77. Active-site residues include His-169 and Glu-171.

In terms of assembly, heterodimer of HisH and HisF.

The protein localises to the cytoplasm. The catalysed reaction is 5-[(5-phospho-1-deoxy-D-ribulos-1-ylimino)methylamino]-1-(5-phospho-beta-D-ribosyl)imidazole-4-carboxamide + L-glutamine = D-erythro-1-(imidazol-4-yl)glycerol 3-phosphate + 5-amino-1-(5-phospho-beta-D-ribosyl)imidazole-4-carboxamide + L-glutamate + H(+). The enzyme catalyses L-glutamine + H2O = L-glutamate + NH4(+). It participates in amino-acid biosynthesis; L-histidine biosynthesis; L-histidine from 5-phospho-alpha-D-ribose 1-diphosphate: step 5/9. Functionally, IGPS catalyzes the conversion of PRFAR and glutamine to IGP, AICAR and glutamate. The HisH subunit catalyzes the hydrolysis of glutamine to glutamate and ammonia as part of the synthesis of IGP and AICAR. The resulting ammonia molecule is channeled to the active site of HisF. The chain is Imidazole glycerol phosphate synthase subunit HisH from Staphylococcus epidermidis (strain ATCC 35984 / DSM 28319 / BCRC 17069 / CCUG 31568 / BM 3577 / RP62A).